Reading from the N-terminus, the 315-residue chain is Methionyl-tRNA formyltransferase (315 aa).

Residues 2–189 (SESLRIIFAG…LITTLKQLAD (188 aa)) form an N-terminal domain region. 113-116 (SLLP) is a binding site for (6S)-5,6,7,8-tetrahydrofolate. Residues 210–315 (KEEARIDWSL…EWFVPGNRLV (106 aa)) form a C-terminal domain region.

It belongs to the Fmt family. Monomer.

It carries out the reaction L-methionyl-tRNA(fMet) + (6R)-10-formyltetrahydrofolate = N-formyl-L-methionyl-tRNA(fMet) + (6S)-5,6,7,8-tetrahydrofolate + H(+). With respect to regulation, activity is optimum in the presence of Mg(2+) and K(+). In terms of biological role, attaches a formyl group to the free amino group of methionyl-tRNA(fMet). The formyl group appears to play a dual role in the initiator identity of N-formylmethionyl-tRNA by promoting its recognition by IF2 and preventing the misappropriation of this tRNA by the elongation apparatus. The chain is Methionyl-tRNA formyltransferase from Escherichia coli (strain K12).